The following is a 515-amino-acid chain: Endoglucanase 2 (515 aa).

A signal peptide spans 1–31 (MVAKPRSRCCCCSVFIGVIILIAIIIAVIFT). The N-linked (GlcNAc...) asparagine glycan is linked to Asn-37. Residue Asp-100 is the Nucleophile of the active site. N-linked (GlcNAc...) asparagine glycosylation is present at Asn-250. His-433 is an active-site residue. Asn-475 carries an N-linked (GlcNAc...) asparagine glycan. Asp-480 is a catalytic residue. Asn-483 is a glycosylation site (N-linked (GlcNAc...) asparagine). Residue Glu-489 is part of the active site.

The protein belongs to the glycosyl hydrolase 9 (cellulase E) family.

Its subcellular location is the secreted. It catalyses the reaction Endohydrolysis of (1-&gt;4)-beta-D-glucosidic linkages in cellulose, lichenin and cereal beta-D-glucans.. The chain is Endoglucanase 2 from Arabidopsis thaliana (Mouse-ear cress).